Consider the following 347-residue polypeptide: Eukaryotic translation initiation factor 3 subunit H (347 aa).

The region spanning 6 to 149 (VCIDSSVALK…PSSTGPQGHT (144 aa)) is the MPN domain. The segment at 136–155 (SDTDPSSTGPQGHTTTTPSG) is disordered. Positions 138-155 (TDPSSTGPQGHTTTTPSG) are enriched in polar residues.

It belongs to the eIF-3 subunit H family. As to quaternary structure, component of the eukaryotic translation initiation factor 3 (eIF-3) complex.

It is found in the cytoplasm. Its function is as follows. Component of the eukaryotic translation initiation factor 3 (eIF-3) complex, which is involved in protein synthesis of a specialized repertoire of mRNAs and, together with other initiation factors, stimulates binding of mRNA and methionyl-tRNAi to the 40S ribosome. The eIF-3 complex specifically targets and initiates translation of a subset of mRNAs involved in cell proliferation. The sequence is that of Eukaryotic translation initiation factor 3 subunit H from Yarrowia lipolytica (strain CLIB 122 / E 150) (Yeast).